The primary structure comprises 259 residues: Transcription factor bHLH80 (259 aa).

The disordered stretch occupies residues 1–25 (MQSTHISGGSSGGGGGGGGEVSRSG). Positions 9–20 (GSSGGGGGGGGE) are enriched in gly residues. The bHLH domain occupies 187-237 (CATHPRSIAERVRRTRISDRIRRLQELVPNMDKQTNTADMLEEAVEYVKAL).

In terms of assembly, homodimer. Expressed constitutively in roots, leaves, stems, and flowers.

The protein localises to the nucleus. The chain is Transcription factor bHLH80 (BHLH80) from Arabidopsis thaliana (Mouse-ear cress).